The sequence spans 543 residues: Hydroxylamine reductase (543 aa).

[4Fe-4S] cluster is bound by residues Cys-5, Cys-8, Cys-17, and Cys-23. Residues His-236, Glu-260, Cys-304, Cys-398, Cys-426, Cys-451, Glu-486, and Lys-488 each contribute to the hybrid [4Fe-2O-2S] cluster site. Position 398 is a cysteine persulfide (Cys-398).

The protein belongs to the HCP family. The cofactor is [4Fe-4S] cluster. Requires hybrid [4Fe-2O-2S] cluster as cofactor.

It localises to the cytoplasm. The catalysed reaction is A + NH4(+) + H2O = hydroxylamine + AH2 + H(+). In terms of biological role, catalyzes the reduction of hydroxylamine to form NH(3) and H(2)O. This is Hydroxylamine reductase from Bacteroides fragilis (strain ATCC 25285 / DSM 2151 / CCUG 4856 / JCM 11019 / LMG 10263 / NCTC 9343 / Onslow / VPI 2553 / EN-2).